The chain runs to 236 residues: Small ribosomal subunit protein eS6 (236 aa).

It belongs to the eukaryotic ribosomal protein eS6 family. Component of the small ribosomal subunit. Part of the small subunit (SSU) processome, composed of more than 70 proteins and the RNA chaperone small nucleolar RNA (snoRNA) U3. Post-translationally, ribosomal protein S6 is the major substrate of protein kinases in eukaryote ribosomes.

The protein localises to the cytoplasm. Its subcellular location is the nucleus. It is found in the nucleolus. In terms of biological role, component of the 40S small ribosomal subunit. Plays an important role in controlling cell growth and proliferation through the selective translation of particular classes of mRNA. Part of the small subunit (SSU) processome, first precursor of the small eukaryotic ribosomal subunit. During the assembly of the SSU processome in the nucleolus, many ribosome biogenesis factors, an RNA chaperone and ribosomal proteins associate with the nascent pre-rRNA and work in concert to generate RNA folding, modifications, rearrangements and cleavage as well as targeted degradation of pre-ribosomal RNA by the RNA exosome. This is Small ribosomal subunit protein eS6 (rps6) from Dictyostelium discoideum (Social amoeba).